The chain runs to 122 residues: Ubiquitin-related modifier 1 (122 aa).

Over residues 33 to 48 (PSTVPADNNTSVTTKD) the composition is skewed to polar residues. Positions 33–52 (PSTVPADNNTSVTTKDAASP) are disordered. The residue at position 122 (G122) is a 1-thioglycine. Residue G122 forms a Glycyl lysine isopeptide (Gly-Lys) (interchain with K-? in acceptor proteins) linkage.

Belongs to the URM1 family. C-terminal thiocarboxylation occurs in 2 steps, it is first acyl-adenylated (-COAMP) via the hesA/moeB/thiF part of UBA4, then thiocarboxylated (-COSH) via the rhodanese domain of UBA4.

The protein resides in the cytoplasm. The protein operates within tRNA modification; 5-methoxycarbonylmethyl-2-thiouridine-tRNA biosynthesis. Acts as a sulfur carrier required for 2-thiolation of mcm(5)S(2)U at tRNA wobble positions of cytosolic tRNA(Lys), tRNA(Glu) and tRNA(Gln). Serves as sulfur donor in tRNA 2-thiolation reaction by being thiocarboxylated (-COSH) at its C-terminus by the MOCS3 homolog UBA4. The sulfur is then transferred to tRNA to form 2-thiolation of mcm(5)S(2)U. Prior mcm(5) tRNA modification by the elongator complex is required for 2-thiolation. Also acts as a ubiquitin-like protein (UBL) that is covalently conjugated via an isopeptide bond to lysine residues of target proteins such as AHP1. The thiocarboxylated form serves as substrate for conjugation and oxidative stress specifically induces the formation of UBL-protein conjugates. This chain is Ubiquitin-related modifier 1, found in Laccaria bicolor (strain S238N-H82 / ATCC MYA-4686) (Bicoloured deceiver).